The primary structure comprises 191 residues: Sec-independent protein translocase protein TatB (191 aa).

Residues 1–21 (MFDIGFSELFLILVIGLLVLG) form a helical membrane-spanning segment. Over residues 119-138 (ESTSQTLTEQLTPSEQVTEA) the composition is skewed to polar residues. Disordered regions lie at residues 119-139 (ESTS…TEAT) and 168-191 (DDDD…DKKA). Residues 181–191 (PQTEEIQDKKA) show a composition bias toward basic and acidic residues.

This sequence belongs to the TatB family. As to quaternary structure, the Tat system comprises two distinct complexes: a TatABC complex, containing multiple copies of TatA, TatB and TatC subunits, and a separate TatA complex, containing only TatA subunits. Substrates initially bind to the TatABC complex, which probably triggers association of the separate TatA complex to form the active translocon.

It localises to the cell inner membrane. Part of the twin-arginine translocation (Tat) system that transports large folded proteins containing a characteristic twin-arginine motif in their signal peptide across membranes. Together with TatC, TatB is part of a receptor directly interacting with Tat signal peptides. TatB may form an oligomeric binding site that transiently accommodates folded Tat precursor proteins before their translocation. The sequence is that of Sec-independent protein translocase protein TatB from Pasteurella multocida (strain Pm70).